Reading from the N-terminus, the 126-residue chain is uncharacterized protein (126 aa).

2 helical membrane passes run 21-43 (LIVW…RIFS) and 48-70 (SVTF…LLLL).

The protein resides in the membrane. This is an uncharacterized protein from Saccharomyces cerevisiae (strain ATCC 204508 / S288c) (Baker's yeast).